Here is a 706-residue protein sequence, read N- to C-terminus: DNA ligase (706 aa).

NAD(+) is bound by residues 47–51, 96–97, and Glu-133; these read DSEYD and SI. The active-site N6-AMP-lysine intermediate is Lys-135. NAD(+)-binding residues include Arg-156, Glu-192, Lys-323, and Lys-347. Zn(2+) is bound by residues Cys-441, Cys-444, Cys-459, and Cys-465. In terms of domain architecture, BRCT spans 624–706; it reads VAPKPLSGKT…MRLLASAEAE (83 aa).

The protein belongs to the NAD-dependent DNA ligase family. LigA subfamily. Mg(2+) serves as cofactor. Mn(2+) is required as a cofactor.

It catalyses the reaction NAD(+) + (deoxyribonucleotide)n-3'-hydroxyl + 5'-phospho-(deoxyribonucleotide)m = (deoxyribonucleotide)n+m + AMP + beta-nicotinamide D-nucleotide.. DNA ligase that catalyzes the formation of phosphodiester linkages between 5'-phosphoryl and 3'-hydroxyl groups in double-stranded DNA using NAD as a coenzyme and as the energy source for the reaction. It is essential for DNA replication and repair of damaged DNA. This is DNA ligase from Polaromonas sp. (strain JS666 / ATCC BAA-500).